The chain runs to 498 residues: Pre-glycoprotein polyprotein GP complex (498 aa).

A lipid anchor (N-myristoyl glycine; by host) is attached at glycine 2. At 2–17 (GQIVTMFEALPHIIDE) the chain is on the extracellular side. A helical transmembrane segment spans residues 18–33 (VINIVIIVLIIITSIK). At 34–58 (AVYNFATCGILALVSFLFLAGRSCG) the chain is on the cytoplasmic side. Zn(2+) is bound at residue cysteine 57. Topologically, residues 59 to 438 (MYGLNGPDIY…QGSTPLALMD (380 aa)) are extracellular. N-linked (GlcNAc...) asparagine; by host glycans are attached at residues asparagine 85, asparagine 95, asparagine 114, asparagine 124, and asparagine 171. 6 cysteine pairs are disulfide-bonded: cysteine 92/cysteine 239, cysteine 123/cysteine 160, cysteine 184/cysteine 220, cysteine 285/cysteine 298, cysteine 307/cysteine 316, and cysteine 370/cysteine 391. Asparagine 232 carries N-linked (GlcNAc...) asparagine; by host glycosylation. 3 N-linked (GlcNAc...) asparagine; by host glycosylation sites follow: asparagine 371, asparagine 396, and asparagine 401. A helical membrane pass occupies residues 439–459 (LLMFSTSAYLISIFLHFVRIP). Residues 460–498 (THRHIKGGSCPKPHRLTNKGICSCGAFKVPGVKTIWKRR) lie on the Cytoplasmic side of the membrane. Residues histidine 461, histidine 463, cysteine 469, histidine 473, cysteine 481, and cysteine 483 each coordinate Zn(2+).

It belongs to the arenaviridae GPC protein family. In terms of assembly, interacts with glycoprotein G2. Part of the GP complex (GP-C) together with glycoprotein G1 and glycoprotein G2. The GP-complex interacts with protein Z, which interacts with ribonucleocapsid; these interactions may induce virion budding. Homotrimer; disulfide-linked. In pre-fusion state, G1 homotrimers bind G2 homotrimers via ionic interactions. Part of the GP complex (GP-C) together with glycoprotein G2 and the stable signal peptide. Interacts with the primary host receptor DAG1 on the cell surface. The GP-complex interacts with protein Z, which interacts with ribonucleocapsid; these interactions may induce virion budding. As to quaternary structure, homotrimer. Interacts with the stable signal peptide. In pre-fusion state, G2 homotrimers bind G1 homotrimers via ionic interactions. Part of the GP complex (GP-C) together with glycoprotein G1 and the stable signal peptide. Acidification in the endosome triggers rearrangements, which ultimately leads to a 6 helix bundle formed by the two heptad repeat domains (HR1 and HR2) in post-fusion state. The GP-complex interacts with protein Z, which interacts with ribonucleocapsid; these interactions may induce virion budding. Specific enzymatic cleavages in vivo yield mature proteins. GP-C polyprotein is cleaved in the endoplasmic reticulum by the host protease MBTPS1. Only cleaved glycoprotein is incorporated into virions. In terms of processing, the SSP remains stably associated with the GP complex following cleavage by signal peptidase and plays crucial roles in the trafficking of GP through the secretory pathway. Post-translationally, myristoylation is necessary for GP2-mediated fusion activity.

The protein resides in the virion membrane. It localises to the host endoplasmic reticulum membrane. It is found in the host Golgi apparatus membrane. The protein localises to the host cell membrane. Its function is as follows. Functions as a cleaved signal peptide that is retained as the third component of the GP complex (GP-C). Helps to stabilize the spike complex in its native conformation. The SSP is required for efficient glycoprotein expression, post-translational maturation cleavage of G1 and G2, glycoprotein transport to the cell surface plasma membrane, formation of infectious virus particles, and acid pH-dependent glycoprotein-mediated cell fusion. Functionally, forms the virion spikes together with glycoprotein G2. The glycoprotein spike trimers are connected to the underlying matrix. Interacts with the host receptor. Mediates virus attachment to the host primary receptor alpha-dystroglycan DAG1 (alpha-DG) at the cell surface. Down-modulates host DAG1. Forms the virion spikes together with glycoprotein G1. The glycoprotein spike trimers are connected to the underlying matrix. Class I viral fusion protein that directs fusion of viral and host endosomal membranes, leading to delivery of the nucleocapsid into the cytoplasm. Membrane fusion is mediated by irreversible conformational changes induced by acidification. The protein is Pre-glycoprotein polyprotein GP complex of Homo sapiens (Human).